Here is a 177-residue protein sequence, read N- to C-terminus: Non-specific lipid transfer protein GPI-anchored 22 (177 aa).

A signal peptide spans 1 to 29 (MARFMAYNQNPQMLALCITVAVMFLGVRS). 4 disulfide bridges follow: C38–C81, C48–C63, C64–C108, and C79–C117. N113 is a glycosylation site (N-linked (GlcNAc...) asparagine). S152 carries the GPI-anchor amidated serine lipid modification. A propeptide spans 153-177 (SSIKGRDNKQFGLMMAGALSIWYIM) (removed in mature form).

Belongs to the plant LTP family. Expressed in seedlings, preferentially in hypocotyls and roots. Also observed in siliques.

The protein resides in the cell membrane. Probable lipid transfer protein. The chain is Non-specific lipid transfer protein GPI-anchored 22 from Arabidopsis thaliana (Mouse-ear cress).